The primary structure comprises 396 residues: CCA-adding enzyme (396 aa).

Residues G27 and R30 each coordinate ATP. CTP-binding residues include G27 and R30. Mg(2+)-binding residues include D40 and D42. 5 residues coordinate ATP: R111, D154, R157, R160, and R163. 5 residues coordinate CTP: R111, D154, R157, R160, and R163.

It belongs to the tRNA nucleotidyltransferase/poly(A) polymerase family. Bacterial CCA-adding enzyme type 3 subfamily. In terms of assembly, homodimer. Mg(2+) is required as a cofactor.

The catalysed reaction is a tRNA precursor + 2 CTP + ATP = a tRNA with a 3' CCA end + 3 diphosphate. It carries out the reaction a tRNA with a 3' CCA end + 2 CTP + ATP = a tRNA with a 3' CCACCA end + 3 diphosphate. Catalyzes the addition and repair of the essential 3'-terminal CCA sequence in tRNAs without using a nucleic acid template. Adds these three nucleotides in the order of C, C, and A to the tRNA nucleotide-73, using CTP and ATP as substrates and producing inorganic pyrophosphate. tRNA 3'-terminal CCA addition is required both for tRNA processing and repair. Also involved in tRNA surveillance by mediating tandem CCA addition to generate a CCACCA at the 3' terminus of unstable tRNAs. While stable tRNAs receive only 3'-terminal CCA, unstable tRNAs are marked with CCACCA and rapidly degraded. The protein is CCA-adding enzyme of Pediococcus pentosaceus (strain ATCC 25745 / CCUG 21536 / LMG 10740 / 183-1w).